We begin with the raw amino-acid sequence, 637 residues long: Zinc finger protein rsv2 (637 aa).

6 disordered regions span residues 1–41 (MDTT…SKMN), 145–164 (SNHQ…PTSA), 169–207 (IITA…QPFS), 221–363 (TGAI…STAL), 404–427 (QDSF…TRSY), and 440–558 (SVNP…GAQR). The segment covering 172–189 (ANSSPSGNAGSNASASMS) has biased composition (low complexity). Positions 196-207 (PSASTINDQPFS) are enriched in polar residues. The span at 279 to 296 (SDLKRSLGHNQKSDRVSK) shows a compositional bias: basic and acidic residues. The segment covering 298–344 (VSPQHQANPSTLNNPLKTQNFDSSKNLYTDNKDSSLVSPTGLQSRME) has biased composition (polar residues). Basic and acidic residues-rich tracts occupy residues 345–355 (QNPEVRAHPMK) and 404–413 (QDSFNKESIK). The segment covering 455 to 471 (VPSNTTISSSPPLTSPV) has biased composition (low complexity). Polar residues-rich tracts occupy residues 472–498 (KTSA…QSAA) and 508–527 (YYNT…QKVS). Positions 544 to 554 (TTPTNSSTTAT) are enriched in low complexity. The C2H2-type 1 zinc-finger motif lies at 572–603 (VRCTLQNRVTGEICNTVFSRTYDLIRHQDTIH). A C2H2-type 2; degenerate zinc finger spans residues 610–635 (FRCEICGDQRHFSRHDALVRHLRVKH).

It localises to the nucleus. The sequence is that of Zinc finger protein rsv2 (rsv2) from Schizosaccharomyces pombe (strain 972 / ATCC 24843) (Fission yeast).